The primary structure comprises 467 residues: Dimethylamine methyltransferase MtbB3 (467 aa).

Position 356 (Pyl356) is a non-standard amino acid, pyrrolysine.

Belongs to the dimethylamine methyltransferase family.

The enzyme catalyses Co(I)-[dimethylamine-specific corrinoid protein] + dimethylamine + H(+) = methyl-Co(III)-[dimethylamine-specific corrinoid protein] + methylamine. It participates in one-carbon metabolism; methanogenesis from dimethylamine. In terms of biological role, catalyzes the transfer of a methyl group from dimethylamine to the corrinoid cofactor of MtbC. This chain is Dimethylamine methyltransferase MtbB3 (mtbB3), found in Methanosarcina acetivorans (strain ATCC 35395 / DSM 2834 / JCM 12185 / C2A).